Consider the following 205-residue polypeptide: Small ribosomal subunit protein uS4 (205 aa).

The region spanning 103-173 (RRLQTIVMKK…LEKSKRAEAA (71 aa)) is the S4 RNA-binding domain. Positions 174–205 (AREAAAEAAEAEQAAAQAAAPTPAPAAAAPKQ) are disordered. Residues 179 to 205 (AEAAEAEQAAAQAAAPTPAPAAAAPKQ) show a composition bias toward low complexity.

This sequence belongs to the universal ribosomal protein uS4 family. Part of the 30S ribosomal subunit. Contacts protein S5. The interaction surface between S4 and S5 is involved in control of translational fidelity.

One of the primary rRNA binding proteins, it binds directly to 16S rRNA where it nucleates assembly of the body of the 30S subunit. Functionally, with S5 and S12 plays an important role in translational accuracy. In Cenarchaeum symbiosum (strain A), this protein is Small ribosomal subunit protein uS4.